Consider the following 777-residue polypeptide: Aconitate hydratase, mitochondrial (777 aa).

Substrate-binding positions include Gln-96 and 189-191 (DSH). Residues Cys-383, Cys-446, and Cys-449 each coordinate [4Fe-4S] cluster. Residues Arg-472, Arg-477, Arg-605, and 668-669 (SR) each bind substrate.

This sequence belongs to the aconitase/IPM isomerase family. As to quaternary structure, monomer. It depends on [4Fe-4S] cluster as a cofactor.

Its subcellular location is the mitochondrion. The enzyme catalyses citrate = D-threo-isocitrate. The protein operates within carbohydrate metabolism; tricarboxylic acid cycle; isocitrate from oxaloacetate: step 2/2. Catalyzes the isomerization of citrate to isocitrate via cis-aconitate, a step in the citric acid cycle. In Candida albicans (strain SC5314 / ATCC MYA-2876) (Yeast), this protein is Aconitate hydratase, mitochondrial (ACO1).